The following is a 491-amino-acid chain: Cytochrome P450 monooxygenase olcB (491 aa).

A helical transmembrane segment spans residues 5–27 (LLLSLSVCLLYVFITAFWNLYIH). Heme is bound at residue Cys435.

Belongs to the cytochrome P450 family. Heme is required as a cofactor.

The protein resides in the membrane. It functions in the pathway secondary metabolite biosynthesis; terpenoid biosynthesis. Its function is as follows. Cytochrome P450 monooxygenase; part of the gene cluster that mediates the biosynthesis of 15-deoxyoxalicine B. The first step of the pathway is the synthesis of nicotinyl-CoA from nicotinic acid by the nicotinic acid-CoA ligase olcI. Nicotinyl-CoA is then a substrate of polyketide synthase olcA to produce 4-hydroxy-6-(3-pyridinyl)-2H-pyran-2-one (HPPO) which is further prenylated by the polyprenyl transferase olcH to yield geranylgeranyl-HPPO. Geranylgeranyl pyrophosphate is provided by the cluster-specific geranylgeranyl pyrophosphate synthase olcC. The FAD-dependent monooxygenase olcE catalyzes the epoxidation of geranylgeranyl-HPPO and the terpene cyclase olcD catalyzes the cyclization of the terpenoid component, resulting in the formation of the tricyclic terpene moiety seen in predecaturin E. The cytochrome P450 monooxygenase then catalyzes the allylic oxidation of predecaturin E, which is followed by spirocylization with concomitant loss of one molecule of water to form decaturin E. Decaturin E is the substrate of the cytochrome P450 monooxygenase olcJ which hydroxylates it at the C-29 position to form decaturin F. The short-chain dehydrogenase/reductase olcF may catalyze the oxidation of decaturin F to generate the 29-hydroxyl-27-one intermediate, and subsequent hemiacetal formation probably leads to the formation of decaturin C. The dioxygenase olcK may be a peroxisomal enzyme that catalyzes the hydroxylation of decaturin C into decaturin A once decaturin C is shuttled into the peroxisome by the MFS transporter olcL. Finally the cytochrome P450 monooxygenase olcB catalyzes the oxidative rearrangement to yield 15-deoxyoxalicine B. In the absence of olcJ, decaturin E may be shunted to a pathway in which it is oxidized to a ketone, possibly by olcF, to form decaturin D, which undergoes further allylic oxidation to yield decaturin G. Moreover, in the absence of oclK or oclL, oclB can convert decaturin C into 15-deoxyoxalicine A. The polypeptide is Cytochrome P450 monooxygenase olcB (Penicillium canescens).